We begin with the raw amino-acid sequence, 973 residues long: MASILDEYENSLSRSAVLQPGCPSVGIPHSGYVNAQLEKEVPIFTKQRIDFTPSERITSLVVSSNQLCMSLGKDTLLRIDLGKANEPNHVELGRKDDAKVHKMFLDHTGSHLLIALSSTEVLYVNRNGQKVRPLARWKGQLVESVGWNKALGTESSTGPILVGTAQGHIFEAELSASEGGLFGPAPDLYFRPLYVLNEEGGPAPVCSLEAERGPDGRSFVIATTRQRLFQFIGRAAEGAEAQGFSGLFAAYTDHPPPFREFPSNLGYSELAFYTPKLRSAPRAFAWMMGDGVLYGALDCGRPDSLLSEERVWEYPEGVGPGASPPLAIVLTQFHFLLLLADRVEAVCTLTGQVVLRDHFLEKFGPLKHMVKDSSTGQLWAYTERAVFRYHVQREARDVWRTYLDMNRFDLAKEYCRERPDCLDTVLAREADFCFRQRRYLESARCYALTQSYFEEIALKFLEARQEEALAEFLQRKLASLKPAERTQATLLTTWLTELYLSRLGALQGDPEALTLYRETKECFRTFLSSPRHKEWLFASRASIHELLASHGDTEHMVYFAVIMQDYERVVAYHCQHEAYEEALAVLARHRDPQLFYKFSPILIRHIPRQLVDAWIEMGSRLDARQLIPALVNYSQGGEVQQVSQAIRYMEFCVNVLGETEQAIHNYLLSLYARGRPDSLLAYLEQAGASPHRVHYDLKYALRLCAEHGHHRACVHVYKVLELYEEAVDLALQVDVDLAKQCADLPEEDEELRKKLWLKIARHVVQEEEDVQTAMACLASCPLLKIEDVLPFFPDFVTIDHFKEAICSSLKAYNHHIQELQREMEEATASAQRIRRDLQELRGRYGTVEPQDKCATCDFPLLNRPFYLFLCGHMFHADCLLQAVRPGLPAYKQARLEELQRKLGAAPPPAKGSARAKEAEGGAATAGPSREQLKADLDELVAAECVYCGELMIRSIDRPFIDPQRYEEEQLSWL.

N-acetylalanine is present on A2. Residues S3, S11, and S13 each carry the phosphoserine modification. K362 carries the post-translational modification N6-acetyllysine. Residues 454–481 (EEIALKFLEARQEEALAEFLQRKLASLK) adopt a coiled-coil conformation. The CHCR repeat unit spans residues 618–772 (GSRLDARQLI…VVQEEEDVQT (155 aa)). Residue S689 is modified to Phosphoserine. Positions 802 to 848 (KEAICSSLKAYNHHIQELQREMEEATASAQRIRRDLQELRGRYGTVE) form a coiled coil. The RING-type zinc-finger motif lies at 853–947 (CATCDFPLLN…ELVAAECVYC (95 aa)). Residues 903–929 (GAAPPPAKGSARAKEAEGGAATAGPSR) are disordered. S912 carries the phosphoserine modification.

The protein belongs to the VPS18 family. Core component of at least two putative endosomal tethering complexes, the homotypic fusion and vacuole protein sorting (HOPS) complex and the class C core vacuole/endosome tethering (CORVET) complex. Their common core is composed of the class C Vps proteins VPS11, VPS16, VPS18 and VPS33A, which in HOPS further associates with VPS39 and VPS41 and in CORVET with VPS8 and TGFBRAP1. Interacts with RAB5C. Interacts with HOOK1. Interacts with STX7, MON1B. Associates with adaptor protein complex 3 (AP-3) and clathrin:AP-3 complexes. Interacts with SYNPO2. Interacts with PLEKHM1. Ubiquitous. Expression was highest in heart and low in lung.

The protein localises to the late endosome membrane. It is found in the lysosome membrane. It localises to the early endosome. The protein resides in the cytoplasmic vesicle. Its subcellular location is the autophagosome. The protein localises to the clathrin-coated vesicle. Functionally, plays a role in vesicle-mediated protein trafficking to lysosomal compartments including the endocytic membrane transport and autophagic pathways. Believed to act as a core component of the putative HOPS and CORVET endosomal tethering complexes which are proposed to be involved in the Rab5-to-Rab7 endosome conversion probably implicating MON1A/B, and via binding SNAREs and SNARE complexes to mediate tethering and docking events during SNARE-mediated membrane fusion. The HOPS complex is proposed to be recruited to Rab7 on the late endosomal membrane and to regulate late endocytic, phagocytic and autophagic traffic towards lysosomes. The CORVET complex is proposed to function as a Rab5 effector to mediate early endosome fusion probably in specific endosome subpopulations. Required for fusion of endosomes and autophagosomes with lysosomes. Involved in dendrite development of Pukinje cells. The chain is Vacuolar protein sorting-associated protein 18 homolog from Homo sapiens (Human).